The chain runs to 7031 residues: MNYRDKIQKFSIRKYTVGTFSTVIATLVFLGFNTSQAHAAETNQPASVVKQKQQSNNEQTENRESQVQNSQNSQNGQSLSATHENEQPNISQANLVDQKVAQSSTTNDEQPASQNVNTKKDSATAATTQPDKEQSKHKQNESQSANKNGNDNRAAHVENHEANVVTASDSSDNGNVQHDRNELQAFFDANYHDYRFIDRENADSGTFNYVKGIFDKINTLLGSNDPINNKDLQLAYKELEQAVALIRTMPQRQQTSRRSNRIQTRSVESRAAEPRSVSDYQNANSSYYVENANDGSGYPVGTYINASSKGAPYNLPTTPWNTLKASDSKEIALMTAKQTGDGYQWVIKFNKGHAPHQNMIFWFALPADQVPVGRTDFVTVNSDGTNVQWSHGAGAGANKPLQQMWEYGVNDPHRSHDFKIRNRSGQVIYDWPTVHIYSLEDLSRASDYFSEAGATPATKAFGRQNFEYINGQKPAESPGVPKVYTFIGQGDASYTISFKTQGPTVNKLYYAAGGRALEYNQLFMYSQLYVESTQDHQQRLNGLRQVVNRTYRIGTTKRVEVSQGNVQTKKVLESTNLNIDDFVDDPLSYVKTPSNKVLGFYSNNANTNAFRPGGAQQLNEYQLSQLFTDQKLQEAARTRNPIRLMIGFDYPDAYGNSETLVPVNLTVLPEIQHNIKFFKNDDTQNIAEKPFSKQAGHPVFYVYAGNQGNASVNLGGSVTSIQPLRINLTSNENFTDKDWQITGIPRTLHIENSTNRPNNARERNIELVGNLLPGDYFGTIRFGRKEQLFEIRVKPHTPTITTTAEQLRGTALQKVPVNISGIPLDPSALVYLVAPTNQTTNGGSEADQIPSGYTILATGTPDGVHNTITIRPQDYVVFIPPVGKQIRAVVYYNKVVASNMSNAVTILPDDIPPTINNPVGINAKYYRGDEVNFTMGVSDRHSGIKNTTITTLPNGWTSNLTKADKNNGSLSITGRVSMNQAFNSDITFKVSATDNVNNTTNDSQSKHVSIHVGKISEDAHPIVLGNTEKVVVVNPTAVSNDEKQSIITAFMNKNQNIRGYLASTDPVTVDNNGNVTLHYRDGSSTTLDATNVMTYEPVVKPEYQTVNAAKTATVTIAKGQSFSIGDIKQYFTLSNGQPIPSGTFTNITSDRTIPTAQEVSQMNAGTQLYHITATNAYHKDSEDFYISLKIIDVKQPEGDQRVYRTSTYDLTTDEISKVKQAFINANRDVITLAEGDISVTNTPNGANVSTITVNINKGRLTKSFASNLANMNFLRWVNFPQDYTVTWTNAKIANRPTDGGLSWSDDHKSLIYRYDATLGTQITTNDILTMLKATTTVPGLRNNITGNEKSQAEAGGRPNFRTTGYSQSNATTDGQRQFTLNGQVIQVLDIINPSNGYGGQPVTNSNTRANHSNSTVVNVNEPAANGAGAFTIDHVVKSNSTHNASDAVYKAQLYLTPYGPKQYVEHLNQNTGNTTDAINIYFVPSDLVNPTISVGNYTNHQVFSGETFTNTITANDNFGVQSVTVPNTSQITGTVDNNHQHVSATAPNVTSATNKTINLLATDTSGNTATTSFNVTVKPLRDKYRVGTSSTAANPVRIANISNNATVSQADQTTIINSLTFTETVPNRSYARASANEITSKTVSNVSRTGNNANVTVTVTYQDGTTSTVTVPVKHVIPEIVAHSHYTVQGQDFPAGNGSSASDYFKLSNGSDIADATITWVSGQAPNKDNTRIGEDITVTAHILIDGETTPITKTATYKVVRTVPKHVFETARGVLYPGVSDMYDAKQYVKPVNNSWSTNAQHMNFQFVGTYGPNKDVVGISTRLIRVTYDNRQTEDLTILSKVKPDPPRIDANSVTYKAGLTNQEIKVNNVLNNSSVKLFKADNTPLNVTNITHGSGFSSVVTVSDALPNGGIKAKSSISMNNVTYTTQDEHGQVVTVTRNESVDSNDSATVTVTPQLQATTEGAVFIKGGDGFDFGHVERFIQNPPHGATVAWHDSPDTWKNTVGNTHKTAVVTLPNGQGTRNVEVPVKVYPVANAKAPSRDVKGQNLTNGTDAMNYITFDPNTNTNGITAAWANRQQPNNQQAGVQHLNVDVTYPGISAAKRVPVTVNVYQFEFPQTTYTTTVGGTLASGTQASGYAHMQNATGLPTDGFTYKWNRDTTGTNDANWSAMNKPNVAKVVNAKYDVIYNGHTFATSLPAKFVVKDVQPAKPTVTETAAGAITIAPGANQTVNTHAGNVTTYADKLVIKRNGNVVTTFTRRNNTSPWVKEASAATVAGIAGTNNGITVAAGTFNPADTIQVVATQGSGETVSDEQRSDDFTVVAPQPNQATTKIWQNGHIDITPNNPSGHLINPTQAMDIAYTEKVGNGAEHSKTINVVRGQNNQWTIANKPDYVTLDAQTGKVTFNANTIKPNSSITITPKAGTGHSVSSNPSTLTAPAAHTVNTTEIVKDYGSNVTAAEINNAVQVANKRTATIKNGTAMPTNLAGGSTTTIPVTVTYNDGSTEEVQESIFTKADKRELITAKNHLDDPVSTEGKKPGTITQYNNAMHNAQQQINTAKTEAQQVINNERATPQQVSDALTKVRAAQTKIDQAKALLQNKEDNSQLVTSKNNLQSSVNQVPSTAGMTQQSIDNYNAKKREAETEITAAQRVIDNGDATAQQISDEKHRVDNALTALNQAKHDLTADTHALEQAVQQLNRTGTTTGKKPASITAYNNSIRALQSDLTSAKNSANAIIQKPIRTVQEVQSALTNVNRVNERLTQAINQLVPLADNSALKTAKTKLDEEINKSVTTDGMTQSSIQAYENAKRAGQTESTNAQNVINNGDATDQQIAAEKTKVEEKYNSLKQAIAGLTPDLAPLQTAKTQLQNDIDQPTSTTGMTSASIAAFNEKLSAARTKIQEIDRVLASHPDVATIRQNVTAANAAKSALDQARNGLTVDKAPLENAKNQLQHSIDTQTSTTGMTQDSINAYNAKLTAARNKIQQINQVLAGSPTVEQINTNTSTANQAKSDLDHARQALTPDKAPLQTAKTQLEQSINQPTDTTGMTTASLNAYNQKLQAARQKLTEINQVLNGNPTVQNINDKVTEANQAKDQLNTARQGLTLDRQPALTTLHGASNLNQAQQNNFTQQINAAQNHAALETIKSNITALNTAMTKLKDSVADNNTIKSDQNYTDATPANKQAYDNAVNAAKGVIGETTNPTMDVNTVNQKAASVKSTKDALDGQQNLQRAKTEATNAITHASDLNQAQKNALTQQVNSAQNVQAVNDIKQTTQSLNTAMTGLKRGVANHNQVVQSDNYVNADTNKKNDYNNAYNHANDIINGNAQHPVITPSDVNNALSNVTSKEHALNGEAKLNAAKQEANTALGHLNNLNNAQRQNLQSQINGAHQIDAVNTIKQNATNLNSAMGNLRQAVADKDQVKRTEDYADADTAKQNAYNSAVSSAETIINQTTNPTMSVDDVNRATSAVTSNKNALNGYEKLAQSKTDAARAIDALPHLNNAQKADVKSKINAASNIAGVNTVKQQGTDLNTAMGNLQGAINDEQTTLNSQNYQDATPSKKTAYTNAVQAAKDILNKSNGQNKTKDQVTEAMNQVNSAKNNLDGTRLLDQAKQTAKQQLNNMTHLTTAQKTNLTNQINSGTTVAGVQTVQSNANTLDQAMNTLRQSIANKDATKASEDYVDANNDKQTAYNNAVAAAETIINANSNPEMNPSTITQKAEQVNSSKTALNGDENLAAAKQNAKTYLNTLTSITDAQKNNLISQITSATRVSGVDTVKQNAQHLDQAMASLQNGINNESQVKSSEKYRDADTNKQQEYDNAITAAKAILNKSTGPNTAQNAVEAALQRVNNAKDALNGDAKLIAAQNAAKQHLGTLTHITTAQRNDLTNQISQATNLAGVESVKQNANSLDGAMGNLQTAINDKSGTLASQNFLDADEQKRNAYNQAVSAAETILNKQTGPNTAKTAVEQALNNVNNAKHALNGTQNLNNAKQAAITAINGASDLNQKQKDALKAQANGAQRVSNAQDVQHNATELNTAMGTLKHAIADKTNTLASSKYVNADSTKQNAYTTKVTNAEHIISGTPTVVTTPSEVTAAANQVNSAKQELNGDERLREAKQNANTAIDALTQLNTPQKAKLKEQVGQANRLEDVQTVQTNGQALNNAMKGLRDSIANETTVKTSQNYTDASPNNQSTYNSAVSNAKGIINQTNNPTMDTSAITQATTQVNNAKNGLNGAENLRNAQNTAKQNLNTLSHLTNNQKSAISSQIDRAGHVSEVTATKNAATELNTQMGNLEQAIHDQNTVKQSVKFTDADKAKRDAYTNAVSRAEAILNKTQGANTSKQDVEAAIQNVSSAKNALNGDQNVTNAKNAAKNALNNLTSINNAQKRDLTTKIDQATTVAGVEAVSNTSTQLNTAMANLQNGINDKTNTLASENYHDADSDKKTAYTQAVTNAENILNKNSGSNLDKTAVENALSQVANAKGALNGNHNLEQAKSNANTTINGLQHLTTAQKDKLKQQVQQAQNVAGVDTVKSSANTLNGAMGTLRNSIQDNTATKNGQNYLDATERNKTNYNNAVDSANGVINATSNPNMDANAINQIATQVTSTKNALDGTHNLTQAKQTATNAIDGATNLNKAQKDALKAQVTSAQRVANVTSIQQTANELNTAMGQLQHGIDDENATKQTQKYRDAEQSKKTAYDQAVAAAKAILNKQTGSNSDKAAVDRALQQVTSTKDALNGDAKLAEAKAAAKQNLGTLNHITNAQRTDLEGQINQATTVDGVNTVKTNANTLDGAMNSLQGSINDKDATLRNQNYLDADESKRNAYTQAVTAAEGILNKQTGGNTSKADVDNALNAVTRAKAALNGADNLRNAKTSATNTIDGLPNLTQLQKDNLKHQVEQAQNVAGVNGVKDKGNTLNTAMGALRTSIQNDNTTKTSQNYLDASDSNKNNYNTAVNNANGVINATNNPNMDANAINGMANQVNTTKAALNGAQNLAQAKTNATNTINNAHDLNQKQKDALKTQVNNAQRVSDANNVQHTATELNSAMTALKAAIADKERTKASGNYVNADQEKRQAYDSKVTNAENIISGTPNATLTVNDVNSAASQVNAAKTALNGDNNLRVAKEHANNTIDGLAQLNNAQKAKLKEQVQSATTLDGVQTVKNSSQTLNTAMKGLRDSIANEATIKAGQNYTDASPNNRNEYDSAVTAAKAIINQTSNPTMEPNTITQVTSQVTTKEQALNGARNLAQAKTTAKNNLNNLTSINNAQKDALTRSIDGATTVAGVNQETAKATELNNAMHSLQNGINDETQTKQTQKYLDAEPSKKSAYDQAVNAAKAILTKASGQNVDKAAVEQALQNVNSTKTALNGDAKLNEAKAAAKQTLGTLTHINNAQRTALDNEITQATNVEGVNTVKAKAQQLDGAMGQLETSIRDKDTTLQSQNYQDADDAKRTAYSQAVNAAATILNKTAGGNTPKADVERAMQAVTQANTALNGIQNLDRAKQAANTAITNASDLNTKQKEALKAQVTSAGRVSAANGVEHTATELNTAMTALKRAIADKAETKASGNYVNADANKRQAYDEKVTAAENIVSGTPTPTLTPADVTNAATQVTNAKTQLNGNHNLEVAKQNANTAIDGLTSLNGPQKAKLKEQVGQATTLPNVQTVRDNAQTLNTAMKGLRDSIANEATIKAGQNYTDASQNKQTDYNSAVTAAKAIIGQTTSPSMNAQEINQAKDQVTAKQQALNGQENLRTAQTNAKQHLNGLSDLTDAQKDAVKRQIEGATHVNEVTQAQNNADALNTAMTNLKNGIQDQNTIKQGVNFTDADEAKRNAYTNAVTQAEQILNKAQGPNTSKDGVETALENVQRAKNELNGNQNVANAKTTAKNALNNLTSINNAQKEALKSQIEGATTVAGVNQVSTTASELNTAMSNLQNGINDEAATKAAQKYTDADREKQTAYNDAVTAAKTLLDKTAGSNDNKAAVEQALQRVNTAKTALNGDERLNEAKNTAKQQVATMSHLTDAQKANLTSQIESGTTVAGVQGIQANAGTLDQAMNQLRQSIASKDATKSSEDYQDANADLQNAYNDAVTNAEGIISATNNPEMNPDTINQKASQVNSAKSALNGDEKLAAAKQTAKSDIGRLTDLNNAQRTAANAEVDQAPNLAAVTAAKNKATSLNTAMGNLKHALAEKDNTKRSVNYTDADQPKQQAYDTAVTQAEAITNANGSNANETQVQAALNQLNQAKNDLNGDNKVAQAKESAKRALASYSNLNNAQSTAATSQIDNATTVAGVTAAQNTANELNTAMGQLQNGINDQNTVKQQVNFTDADQGKKDAYTNAVTNAQGILDKAHGQNMTKAQVEAALNQVTTAKNALNGDANVRQAKSDAKANLGTLTHLNNAQKQDLTSQIEGATTVNGVNGVKTKAQDLDGAMQRLQSAIANKDQTKASENYIDADPTKKTAFDNAITQAESYLNKDHGANKDKQAVEQAIQSVTSTENALNGDANLQRAKTEAIQAIDNLTHLNTPQKTALKQQVNAAQRVSGVTDLKNSATSLNNAMDQLKQAIADHDTIVASGNYTNASPDKQGAYTDAYNAAKNIVNGSPNVITNAADVTAATQRVNNAETGLNGDTNLATAKQQAKDALRQMTHLSDAQKQSITGQIDSATQVTGVQSVKDNATNLDNAMNQLRNSIANKDDVKASQPYVDADRDKQNAYNTAVTNAENIINATSQPTLDPSAVTQAANQVSTNKTALNGAQNLANKKQETTANINQLSHLNNAQKQDLNTQVTNAPNISTVNQVKTKAEQLDQAMERLINGIQDKDQVKQSVNFTDADPEKQTAYNNAVTAAENIINQANGTNANQSQVEAALSTVTTTKQALNGDRKVTDAKNNANQTLSTLDNLNNAQKGAVTGNINQAHTVAEVTQAIQTAQELNTAMGNLKNSLNDKDTTLGSQNFADADPEKKNAYNEAVHNAENILNKSTGTNVPKDQVEAAMNQVNATKAALNGTQNLEKAKQHANTAIDGLSHLTNAQK.

Residues 1-39 form the signal peptide; the sequence is MNYRDKIQKFSIRKYTVGTFSTVIATLVFLGFNTSQAHA. Polar residues predominate over residues 41-59; that stretch reads ETNQPASVVKQKQQSNNEQ. Disordered stretches follow at residues 41 to 86, 99 to 152, 250 to 277, 1342 to 1373, and 2418 to 2438; these read ETNQ…HENE, KVAQ…GNDN, PQRQ…PRSV, NNIT…ATTD, and TITP…TLTA. The segment covering 65–80 has biased composition (low complexity); it reads SQVQNSQNSQNGQSLS. Over residues 99–117 the composition is skewed to polar residues; sequence KVAQSSTTNDEQPASQNVN. Over residues 130–140 the composition is skewed to basic and acidic residues; that stretch reads PDKEQSKHKQN. Polar residues-rich tracts occupy residues 141-151, 250-266, 1360-1373, and 2427-2438; these read ESQSANKNGND, PQRQ…QTRS, FRTT…ATTD, and HSVSSNPSTLTA. FIVAR domains follow at residues 2524-2580, 2610-2666, 2687-2750, 2780-2836, 2864-2919, 2947-3002, 3030-3085, 3154-3212, 3280-3339, 3407-3465, 3533-3591, 3659-3717, 3785-3843, 3911-3969, 4037-4095, 4163-4221, 4289-4347, 4415-4473, 4541-4599, 4667-4725, 4793-4851, 4919-4977, 5045-5103, 5171-5229, 5297-5355, 5423-5481, 5549-5607, 5675-5733, 5801-5859, 5927-5985, 6053-6111, 6179-6236, 6304-6362, 6430-6488, 6556-6614, 6682-6740, 6818-6866, and 6934-6992; these read AKNH…VSDA, SKNN…ISDE, DTHA…VQSA, AKTK…IAAE, AKTQ…IRQN, AKNQ…INTN, AKTQ…INDK, AMTK…VNQK, AMTG…VNNA, AMGN…VNRA, AMGN…VTEA, AMNT…ITQK, AMAS…VEAA, AMGN…VEQA, AMGT…VTAA, AMKG…ITQA, QMGN…VEAA, AMAN…VENA, AMGT…INQI, AMGQ…VDRA, AMNS…VDNA, AMGA…INGM, AMTA…VNSA, AMKG…ITQV, AMHS…VEQA, AMGQ…VERA, AMTA…VTNA, AMKG…INQA, AMTN…VETA, AMSN…VEQA, AMNQ…INQK, AMGN…VQAA, AMGQ…VEAA, AMQR…VEQA, AMDQ…VTAA, AMNQ…VTQA, DKDQ…VEAA, and AMGN…VEAA.

This is Extracellular matrix-binding protein EbhB (ebhB) from Staphylococcus aureus (strain Newman).